A 600-amino-acid chain; its full sequence is Aspartate--tRNA(Asp/Asn) ligase (600 aa).

An L-aspartate-binding site is contributed by E174. The aspartate stretch occupies residues 198–201 (QLFK). R220 contributes to the L-aspartate binding site. Residues 220 to 222 (RDE) and Q229 contribute to the ATP site. An L-aspartate-binding site is contributed by H457. E491 serves as a coordination point for ATP. An L-aspartate-binding site is contributed by R498. Position 543 to 546 (543 to 546 (GLDR)) interacts with ATP.

It belongs to the class-II aminoacyl-tRNA synthetase family. Type 1 subfamily. Homodimer.

Its subcellular location is the cytoplasm. The enzyme catalyses tRNA(Asx) + L-aspartate + ATP = L-aspartyl-tRNA(Asx) + AMP + diphosphate. Aspartyl-tRNA synthetase with relaxed tRNA specificity since it is able to aspartylate not only its cognate tRNA(Asp) but also tRNA(Asn). Reaction proceeds in two steps: L-aspartate is first activated by ATP to form Asp-AMP and then transferred to the acceptor end of tRNA(Asp/Asn). In Burkholderia lata (strain ATCC 17760 / DSM 23089 / LMG 22485 / NCIMB 9086 / R18194 / 383), this protein is Aspartate--tRNA(Asp/Asn) ligase.